The primary structure comprises 257 residues: 3-methyl-2-oxobutanoate hydroxymethyltransferase (257 aa).

The Mg(2+) site is built by D42 and D86. Residues 42 to 43 (DS), D86, and K116 each bind 3-methyl-2-oxobutanoate. E118 provides a ligand contact to Mg(2+). E185 functions as the Proton acceptor in the catalytic mechanism.

Belongs to the PanB family. Homodecamer; pentamer of dimers. Requires Mg(2+) as cofactor.

It is found in the cytoplasm. It carries out the reaction 3-methyl-2-oxobutanoate + (6R)-5,10-methylene-5,6,7,8-tetrahydrofolate + H2O = 2-dehydropantoate + (6S)-5,6,7,8-tetrahydrofolate. The protein operates within cofactor biosynthesis; (R)-pantothenate biosynthesis; (R)-pantoate from 3-methyl-2-oxobutanoate: step 1/2. Functionally, catalyzes the reversible reaction in which hydroxymethyl group from 5,10-methylenetetrahydrofolate is transferred onto alpha-ketoisovalerate to form ketopantoate. The sequence is that of 3-methyl-2-oxobutanoate hydroxymethyltransferase from Prochlorococcus marinus (strain MIT 9515).